The primary structure comprises 887 residues: Translation initiation factor IF-2 (887 aa).

Disordered regions lie at residues 31 to 87, 94 to 113, and 129 to 285; these read KLAQ…PRRI, SFVSEDLNSPQPPVPVDSDA, and VETE…KWRK. Residues 42–59 are compositionally biased toward basic and acidic residues; that stretch reads SSSEKPSTKVPEKIAKEK. 2 stretches are compositionally biased toward basic and acidic residues: residues 150-171 and 199-212; these read VVAKEPPAPKKEPEVVVKKEPP and PKKEDKPAPKEKTK. Over residues 213 to 223 the composition is skewed to low complexity; that stretch reads TTQTKPQQSSD. Positions 241 to 273 are enriched in basic and acidic residues; that stretch reads YRRDVSKKSGSDFRDRAKKDDNPKAFTGRDRYG. Residues 393–562 enclose the tr-type G domain; it reads TRPPIVAFMG…ALQAEVLELK (170 aa). Residues 402–409 form a G1 region; it reads GHVDHGKT. Residue 402 to 409 participates in GTP binding; sequence GHVDHGKT. The tract at residues 427 to 431 is G2; the sequence is AITQH. The segment at 448 to 451 is G3; it reads DTPG. GTP contacts are provided by residues 448 to 452 and 502 to 505; these read DTPGH and NKCD. Positions 502-505 are G4; it reads NKCD. The G5 stretch occupies residues 538–540; sequence SAK.

Belongs to the TRAFAC class translation factor GTPase superfamily. Classic translation factor GTPase family. IF-2 subfamily.

It is found in the cytoplasm. Its function is as follows. One of the essential components for the initiation of protein synthesis. Protects formylmethionyl-tRNA from spontaneous hydrolysis and promotes its binding to the 30S ribosomal subunits. Also involved in the hydrolysis of GTP during the formation of the 70S ribosomal complex. This chain is Translation initiation factor IF-2, found in Chlamydia caviae (strain ATCC VR-813 / DSM 19441 / 03DC25 / GPIC) (Chlamydophila caviae).